The chain runs to 164 residues: 6,7-dimethyl-8-ribityllumazine synthase (164 aa).

5-amino-6-(D-ribitylamino)uracil contacts are provided by residues F24, 62–64, and 86–88; these read SFE and AVI. Position 91–92 (91–92) interacts with (2S)-2-hydroxy-3-oxobutyl phosphate; it reads QT. H94 (proton donor) is an active-site residue. F119 provides a ligand contact to 5-amino-6-(D-ribitylamino)uracil. Position 133 (R133) interacts with (2S)-2-hydroxy-3-oxobutyl phosphate.

This sequence belongs to the DMRL synthase family.

It catalyses the reaction (2S)-2-hydroxy-3-oxobutyl phosphate + 5-amino-6-(D-ribitylamino)uracil = 6,7-dimethyl-8-(1-D-ribityl)lumazine + phosphate + 2 H2O + H(+). It participates in cofactor biosynthesis; riboflavin biosynthesis; riboflavin from 2-hydroxy-3-oxobutyl phosphate and 5-amino-6-(D-ribitylamino)uracil: step 1/2. In terms of biological role, catalyzes the formation of 6,7-dimethyl-8-ribityllumazine by condensation of 5-amino-6-(D-ribitylamino)uracil with 3,4-dihydroxy-2-butanone 4-phosphate. This is the penultimate step in the biosynthesis of riboflavin. The protein is 6,7-dimethyl-8-ribityllumazine synthase of Synechocystis sp. (strain ATCC 27184 / PCC 6803 / Kazusa).